The chain runs to 252 residues: Tricin synthase 1 (252 aa).

Residues S65, E87, 89–90 (GV), S95, and D113 contribute to the S-adenosyl-L-methionine site. An a divalent metal cation-binding site is contributed by D168. Residue D170 participates in S-adenosyl-L-methionine binding. 2 residues coordinate a divalent metal cation: D194 and N195.

The protein belongs to the class I-like SAM-binding methyltransferase superfamily. Cation-dependent O-methyltransferase family. CCoAMT subfamily. It depends on Mg(2+) as a cofactor. Mn(2+) is required as a cofactor. Requires Co(2+) as cofactor. As to expression, ubiquitous. Highest expression in stems and roots.

It localises to the nucleus. It carries out the reaction tricetin + 2 S-adenosyl-L-methionine = 3',5'-di-O-methyltricetin + 2 S-adenosyl-L-homocysteine + 2 H(+). In terms of biological role, catalyzes the stepwise methylation of tricetin to its 3'-mono- and 3',5'-dimethyl ethers. No 3',4',5'-trimethylated ester derivatives are produced. Can use caffeoyl-CoA, 5-hydroxyferulic acid, luteolin, tricetin, quercetin, myrcetin and 7,8-dihydroxyflavone as substrates, but not naringenin, apigenin or kaempferol. The 2,3-double bond and the O-dihydroxyl group of the substrate are both required for catalytic activity of the enzyme. This chain is Tricin synthase 1 (ROMT-15), found in Oryza sativa subsp. japonica (Rice).